The chain runs to 447 residues: Argininosuccinate lyase (447 aa).

The protein belongs to the lyase 1 family. Argininosuccinate lyase subfamily.

It localises to the cytoplasm. It catalyses the reaction 2-(N(omega)-L-arginino)succinate = fumarate + L-arginine. Its pathway is amino-acid biosynthesis; L-arginine biosynthesis; L-arginine from L-ornithine and carbamoyl phosphate: step 3/3. The chain is Argininosuccinate lyase from Sulfolobus acidocaldarius (strain ATCC 33909 / DSM 639 / JCM 8929 / NBRC 15157 / NCIMB 11770).